A 456-amino-acid polypeptide reads, in one-letter code: Enolase (456 aa).

Gln-164 contributes to the (2R)-2-phosphoglycerate binding site. Glu-207 (proton donor) is an active-site residue. Residues Asp-244, Glu-287, and Asp-314 each coordinate Mg(2+). Residues Lys-339, Arg-368, Ser-369, and Lys-390 each contribute to the (2R)-2-phosphoglycerate site. The Proton acceptor role is filled by Lys-339.

Belongs to the enolase family. Component of the RNA degradosome, a multiprotein complex involved in RNA processing and mRNA degradation. Mg(2+) serves as cofactor.

The protein resides in the cytoplasm. The protein localises to the secreted. Its subcellular location is the cell surface. It carries out the reaction (2R)-2-phosphoglycerate = phosphoenolpyruvate + H2O. The protein operates within carbohydrate degradation; glycolysis; pyruvate from D-glyceraldehyde 3-phosphate: step 4/5. In terms of biological role, catalyzes the reversible conversion of 2-phosphoglycerate (2-PG) into phosphoenolpyruvate (PEP). It is essential for the degradation of carbohydrates via glycolysis. The polypeptide is Enolase (Francisella tularensis subsp. novicida (strain U112)).